An 86-amino-acid chain; its full sequence is Large ribosomal subunit protein bL31B (86 aa).

It belongs to the bacterial ribosomal protein bL31 family. Type B subfamily. As to quaternary structure, part of the 50S ribosomal subunit.

The sequence is that of Large ribosomal subunit protein bL31B from Ralstonia pickettii (strain 12J).